Here is a 234-residue protein sequence, read N- to C-terminus: Uracil-DNA glycosylase (234 aa).

Residue Asp68 is the Proton acceptor of the active site.

This sequence belongs to the uracil-DNA glycosylase (UDG) superfamily. UNG family.

The protein resides in the cytoplasm. It catalyses the reaction Hydrolyzes single-stranded DNA or mismatched double-stranded DNA and polynucleotides, releasing free uracil.. Functionally, excises uracil residues from the DNA which can arise as a result of misincorporation of dUMP residues by DNA polymerase or due to deamination of cytosine. The chain is Uracil-DNA glycosylase from Ruegeria sp. (strain TM1040) (Silicibacter sp.).